The following is a 442-amino-acid chain: 3-phosphoshikimate 1-carboxyvinyltransferase (442 aa).

3 residues coordinate 3-phosphoshikimate: Lys25, Ser26, and Arg30. Lys25 serves as a coordination point for phosphoenolpyruvate. 2 residues coordinate phosphoenolpyruvate: Gly96 and Arg124. The 3-phosphoshikimate site is built by Ser171, Ser172, Gln173, Ser203, Asp325, and Lys352. Residue Gln173 coordinates phosphoenolpyruvate. Asp325 acts as the Proton acceptor in catalysis. 3 residues coordinate phosphoenolpyruvate: Arg356, Arg400, and Lys425.

Belongs to the EPSP synthase family. In terms of assembly, monomer.

The protein resides in the cytoplasm. It catalyses the reaction 3-phosphoshikimate + phosphoenolpyruvate = 5-O-(1-carboxyvinyl)-3-phosphoshikimate + phosphate. It functions in the pathway metabolic intermediate biosynthesis; chorismate biosynthesis; chorismate from D-erythrose 4-phosphate and phosphoenolpyruvate: step 6/7. Functionally, catalyzes the transfer of the enolpyruvyl moiety of phosphoenolpyruvate (PEP) to the 5-hydroxyl of shikimate-3-phosphate (S3P) to produce enolpyruvyl shikimate-3-phosphate and inorganic phosphate. The polypeptide is 3-phosphoshikimate 1-carboxyvinyltransferase (Bordetella pertussis (strain Tohama I / ATCC BAA-589 / NCTC 13251)).